Consider the following 725-residue polypeptide: Catalase-peroxidase (725 aa).

2 stretches are compositionally biased toward polar residues: residues 1–12 (MSTSNDPSNNAS) and 23–32 (PKQSAGSGTA). Residues 1–20 (MSTSNDPSNNASAGKCPFHA) form the signal peptide. The interval 1 to 35 (MSTSNDPSNNASAGKCPFHAETPKQSAGSGTANRD) is disordered. The segment at residues 105–226 (WHGAGTYRTV…IGATEMGLIY (122 aa)) is a cross-link (tryptophyl-tyrosyl-methioninium (Trp-Tyr) (with M-252)). Residue His106 is the Proton acceptor of the active site. The tryptophyl-tyrosyl-methioninium (Tyr-Met) (with W-105) cross-link spans 226 to 252 (YVNPEGPNASGEPLSAAAAIRATFGNM). His267 serves as a coordination point for heme b.

It belongs to the peroxidase family. Peroxidase/catalase subfamily. As to quaternary structure, homodimer or homotetramer. The cofactor is heme b. Formation of the three residue Trp-Tyr-Met cross-link is important for the catalase, but not the peroxidase activity of the enzyme.

It carries out the reaction H2O2 + AH2 = A + 2 H2O. The enzyme catalyses 2 H2O2 = O2 + 2 H2O. Its function is as follows. Bifunctional enzyme with both catalase and broad-spectrum peroxidase activity. The chain is Catalase-peroxidase from Klebsiella pneumoniae subsp. pneumoniae (strain ATCC 700721 / MGH 78578).